Consider the following 481-residue polypeptide: UDP-glucose 6-dehydrogenase 1 (481 aa).

NAD(+) contacts are provided by residues 8–13 (GAGYVG), aspartate 33, arginine 38, 86–90 (VNTPT), 127–128 (ST), and glutamate 161. Substrate contacts are provided by residues 157–161 (EFLAE), 216–223 (KLAANAFL), and 256–269 (RIGP…VGFG). Cysteine 272 (nucleophile) is an active-site residue. NAD(+) is bound at residue 272–275 (CFQK). 334-335 (FK) is a substrate binding site. Arginine 342 contacts NAD(+). Arginine 448 lines the substrate pocket.

The protein belongs to the UDP-glucose/GDP-mannose dehydrogenase family.

The enzyme catalyses UDP-alpha-D-glucose + 2 NAD(+) + H2O = UDP-alpha-D-glucuronate + 2 NADH + 3 H(+). It functions in the pathway nucleotide-sugar biosynthesis; UDP-alpha-D-glucuronate biosynthesis; UDP-alpha-D-glucuronate from UDP-alpha-D-glucose: step 1/1. Inhibited by UDP-xylose. In terms of biological role, involved in the biosynthesis of UDP-glucuronic acid (UDP-GlcA), providing nucleotide sugars for cell-wall polymers. The sequence is that of UDP-glucose 6-dehydrogenase 1 (UGD1) from Arabidopsis thaliana (Mouse-ear cress).